A 294-amino-acid chain; its full sequence is Protoheme IX farnesyltransferase (294 aa).

Helical transmembrane passes span 19–39 (PKQT…AGGM), 41–61 (LDAL…TTSV), 89–109 (VEAL…SYLI), 111–131 (PWTA…YTMW), 138–158 (LSII…WAAA), 166–186 (AIMI…YISI), 218–238 (VLMI…PIFL), and 272–292 (SPVE…RILW).

The protein belongs to the UbiA prenyltransferase family. Protoheme IX farnesyltransferase subfamily.

Its subcellular location is the cell membrane. It catalyses the reaction heme b + (2E,6E)-farnesyl diphosphate + H2O = Fe(II)-heme o + diphosphate. It functions in the pathway porphyrin-containing compound metabolism; heme O biosynthesis; heme O from protoheme: step 1/1. Its function is as follows. Converts heme B (protoheme IX) to heme O by substitution of the vinyl group on carbon 2 of heme B porphyrin ring with a hydroxyethyl farnesyl side group. This is Protoheme IX farnesyltransferase from Korarchaeum cryptofilum (strain OPF8).